The primary structure comprises 478 residues: Zinc metalloproteinase/disintegrin (478 aa).

Residues 1 to 20 (MIQVLLVTICLAAFPYQGSS) form the signal peptide. Residues 21–188 (IILESGNVND…PIKKVSQLNL (168 aa)) constitute a propeptide that is removed on maturation. Positions 194-391 (RHVDIVVVVD…QNPQCILNKP (198 aa)) constitute a Peptidase M12B domain. Residues C207 and C248 are joined by a disulfide bond. The N-linked (GlcNAc...) (complex) asparagine glycan is linked to N279. 3 disulfide bridges follow: C305/C386, C345/C370, and C347/C353. Position 330 (H330) interacts with Zn(2+). E331 is a catalytic residue. Zn(2+) is bound by residues H334 and H340. N369 carries N-linked (GlcNAc...) (complex) asparagine glycosylation. A propeptide spanning residues 392 to 407 (LRTVSIPVSGNEHLEA) is cleaved from the precursor. Residues 397-478 (IPVSGNEHLE…ADCPRYHSHA (82 aa)) form the Disintegrin domain. Intrachain disulfides connect C411–C426, C413–C421, C420–C443, C434–C440, C439–C464, and C452–C471. The Cell attachment site signature appears at 456–458 (RGD). The propeptide occupies 476–478 (SHA).

It belongs to the venom metalloproteinase (M12B) family. P-II subfamily. P-IIa sub-subfamily. In terms of assembly, monomeric (disintegrin). It depends on Zn(2+) as a cofactor. Glycans are composed of 4 GlcNAc, 3 Man, 2 Gal, 2 NeuAC and 1 Fuc residue. Expressed by the venom gland.

The protein localises to the secreted. Its function is as follows. Impairs hemostasis in the envenomed animal. Functionally, inhibits platelet aggregation induced by ADP, thrombin, platelet-activating factor and collagen. Acts by inhibiting fibrinogen interaction with platelet receptors alpha-IIb/beta-3 (ITGA2B/ITGB3). This chain is Zinc metalloproteinase/disintegrin, found in Calloselasma rhodostoma (Malayan pit viper).